The sequence spans 359 residues: Hereditary hemochromatosis protein homolog (359 aa).

An N-terminal signal peptide occupies residues 1-24 (MSLSAGLPVRPLLLLLLLLWSVAP). The alpha-1 stretch occupies residues 25 to 126 (QALPPRSHSL…KVTKLGVVSE (102 aa)). The Extracellular segment spans residues 25 to 318 (QALPPRSHSL…WEPLQSQAMI (294 aa)). N-linked (GlcNAc...) asparagine glycans are attached at residues Asn-114, Asn-142, Asn-166, and Asn-246. Residues 127–217 (SHILQVVLGC…ELGRGVLGQQ (91 aa)) form an alpha-2 region. 2 disulfides stabilise this stretch: Cys-136–Cys-199 and Cys-237–Cys-294. Residues 218 to 309 (VPTLVKVTRH…GLDQPLTASW (92 aa)) form an alpha-3 region. The Ig-like C1-type domain occupies 219-308 (PTLVKVTRHW…PGLDQPLTAS (90 aa)). Residues 310–318 (EPLQSQAMI) are connecting peptide. Residues 319–339 (IGIISGVTVCAIFLVGILFLI) traverse the membrane as a helical segment. Topologically, residues 340–359 (LRKRKASGGTMGGYVLTDCE) are cytoplasmic.

Belongs to the MHC class I family. As to quaternary structure, binds TFR through the extracellular domain in a pH-dependent manner.

Its subcellular location is the cell membrane. In terms of biological role, binds to transferrin receptor (TFR) and reduces its affinity for iron-loaded transferrin. In Mus musculus (Mouse), this protein is Hereditary hemochromatosis protein homolog (Hfe).